A 507-amino-acid chain; its full sequence is ATP synthase subunit alpha, chloroplastic (507 aa).

Residue 170 to 177 coordinates ATP; that stretch reads GDRQTGKT.

Belongs to the ATPase alpha/beta chains family. F-type ATPases have 2 components, CF(1) - the catalytic core - and CF(0) - the membrane proton channel. CF(1) has five subunits: alpha(3), beta(3), gamma(1), delta(1), epsilon(1). CF(0) has four main subunits: a, b, b' and c.

It localises to the plastid. Its subcellular location is the chloroplast thylakoid membrane. It catalyses the reaction ATP + H2O + 4 H(+)(in) = ADP + phosphate + 5 H(+)(out). In terms of biological role, produces ATP from ADP in the presence of a proton gradient across the membrane. The alpha chain is a regulatory subunit. This chain is ATP synthase subunit alpha, chloroplastic, found in Acorus calamus var. americanus (American sweet flag).